The sequence spans 80 residues: U19-lycotoxin-Ls1b (80 aa).

The signal sequence occupies residues 1–22; the sequence is MSPKVQALIFIVGLITLLAAHA. Residues 23–34 constitute a propeptide that is removed on maturation; it reads QEELSDNIESER. Intrachain disulfides connect Cys36–Cys50, Cys43–Cys55, Cys49–Cys66, and Cys57–Cys64.

It belongs to the neurotoxin 02 (plectoxin) family. 05 (U19-lycotoxin) subfamily. Expressed by the venom gland.

The protein resides in the secreted. This is U19-lycotoxin-Ls1b from Lycosa singoriensis (Wolf spider).